The chain runs to 532 residues: Membrane protein insertase YidC (532 aa).

A run of 5 helical transmembrane segments spans residues 7 to 27 (FFIFAFLFVSFLLWQAWQSQM), 336 to 356 (LTILYSIIGNWGFSIILITFI), 413 to 433 (GGFLPIFIQMPIFLSLYYMLI), 450 to 470 (LSSQDPYYVLPVIMGLTMFFI), and 492 to 512 (PVIFTAFFLWFPSGLVLYYII).

It belongs to the OXA1/ALB3/YidC family. Type 1 subfamily. In terms of assembly, interacts with the Sec translocase complex via SecD. Specifically interacts with transmembrane segments of nascent integral membrane proteins during membrane integration.

It localises to the cell membrane. Functionally, required for the insertion and/or proper folding and/or complex formation of integral membrane proteins into the membrane. Involved in integration of membrane proteins that insert both dependently and independently of the Sec translocase complex, as well as at least some lipoproteins. Aids folding of multispanning membrane proteins. This Buchnera aphidicola subsp. Acyrthosiphon pisum (strain Tuc7) protein is Membrane protein insertase YidC.